Reading from the N-terminus, the 239-residue chain is 1-(5-phosphoribosyl)-5-[(5-phosphoribosylamino)methylideneamino] imidazole-4-carboxamide isomerase (239 aa).

Aspartate 8 acts as the Proton acceptor in catalysis. Aspartate 129 functions as the Proton donor in the catalytic mechanism.

This sequence belongs to the HisA/HisF family.

It is found in the cytoplasm. The catalysed reaction is 1-(5-phospho-beta-D-ribosyl)-5-[(5-phospho-beta-D-ribosylamino)methylideneamino]imidazole-4-carboxamide = 5-[(5-phospho-1-deoxy-D-ribulos-1-ylimino)methylamino]-1-(5-phospho-beta-D-ribosyl)imidazole-4-carboxamide. The protein operates within amino-acid biosynthesis; L-histidine biosynthesis; L-histidine from 5-phospho-alpha-D-ribose 1-diphosphate: step 4/9. The protein is 1-(5-phosphoribosyl)-5-[(5-phosphoribosylamino)methylideneamino] imidazole-4-carboxamide isomerase of Legionella pneumophila (strain Paris).